Reading from the N-terminus, the 621-residue chain is Probable serine/threonine-protein kinase WNK2 (621 aa).

The Protein kinase domain occupies 28-286; sequence GRYTEVLGKG…AQELLMDPFL (259 aa). Residues 108–111 and Lys-158 contribute to the ATP site; that span reads TEVF. Asp-175 acts as the Proton acceptor in catalysis. Disordered regions lie at residues 438–490, 501–520, 527–553, and 600–621; these read SVEN…SDSP, VEPHIGGNMPNGILKKNDTD, GTSVDLPNPSMIDRKSGVASVSTSPQS, and HREETLTRCRLKADERNRSDKP.

The protein belongs to the protein kinase superfamily. Ser/Thr protein kinase family. WNK subfamily.

The catalysed reaction is L-seryl-[protein] + ATP = O-phospho-L-seryl-[protein] + ADP + H(+). It carries out the reaction L-threonyl-[protein] + ATP = O-phospho-L-threonyl-[protein] + ADP + H(+). This is Probable serine/threonine-protein kinase WNK2 (WNK2) from Oryza sativa subsp. japonica (Rice).